The primary structure comprises 104 residues: uncharacterized protein (104 aa).

Disordered stretches follow at residues 1-48 and 66-104; these read MLRR…NNQP and QENT…RRCS.

This is an uncharacterized protein from Saccharomyces cerevisiae (strain ATCC 204508 / S288c) (Baker's yeast).